The chain runs to 169 residues: N5-carboxyaminoimidazole ribonucleotide mutase (169 aa).

Residues S16, D19, and R46 each contribute to the substrate site.

Belongs to the AIR carboxylase family. Class I subfamily.

It carries out the reaction 5-carboxyamino-1-(5-phospho-D-ribosyl)imidazole + H(+) = 5-amino-1-(5-phospho-D-ribosyl)imidazole-4-carboxylate. It participates in purine metabolism; IMP biosynthesis via de novo pathway; 5-amino-1-(5-phospho-D-ribosyl)imidazole-4-carboxylate from 5-amino-1-(5-phospho-D-ribosyl)imidazole (N5-CAIR route): step 2/2. Functionally, catalyzes the conversion of N5-carboxyaminoimidazole ribonucleotide (N5-CAIR) to 4-carboxy-5-aminoimidazole ribonucleotide (CAIR). The sequence is that of N5-carboxyaminoimidazole ribonucleotide mutase from Escherichia coli O157:H7.